Reading from the N-terminus, the 73-residue chain is Conotoxin ArMKLT2-022 (73 aa).

Positions 1-22 (MKLTCVLIIAVLFLTACQLTTG) are cleaved as a signal peptide. The propeptide occupies 23 to 40 (EQKDHAQRSADRNSKLTR). Glutamine 41 is modified (pyrrolidone carboxylic acid). Cystine bridges form between cysteine 42/cysteine 56, cysteine 49/cysteine 60, and cysteine 55/cysteine 67.

Belongs to the conotoxin O1 superfamily. In terms of tissue distribution, expressed by the venom duct.

It localises to the secreted. The polypeptide is Conotoxin ArMKLT2-022 (Conus arenatus (Sand-dusted cone)).